We begin with the raw amino-acid sequence, 308 residues long: Methionyl-tRNA formyltransferase (308 aa).

109 to 112 (SLLP) lines the (6S)-5,6,7,8-tetrahydrofolate pocket.

Belongs to the Fmt family.

The catalysed reaction is L-methionyl-tRNA(fMet) + (6R)-10-formyltetrahydrofolate = N-formyl-L-methionyl-tRNA(fMet) + (6S)-5,6,7,8-tetrahydrofolate + H(+). In terms of biological role, attaches a formyl group to the free amino group of methionyl-tRNA(fMet). The formyl group appears to play a dual role in the initiator identity of N-formylmethionyl-tRNA by promoting its recognition by IF2 and preventing the misappropriation of this tRNA by the elongation apparatus. The polypeptide is Methionyl-tRNA formyltransferase (Methylococcus capsulatus (strain ATCC 33009 / NCIMB 11132 / Bath)).